The following is a 275-amino-acid chain: Ribosomal RNA small subunit methyltransferase A (275 aa).

The S-adenosyl-L-methionine site is built by N19, L21, G46, E71, D94, and N117.

Belongs to the class I-like SAM-binding methyltransferase superfamily. rRNA adenine N(6)-methyltransferase family. RsmA subfamily.

It is found in the cytoplasm. The enzyme catalyses adenosine(1518)/adenosine(1519) in 16S rRNA + 4 S-adenosyl-L-methionine = N(6)-dimethyladenosine(1518)/N(6)-dimethyladenosine(1519) in 16S rRNA + 4 S-adenosyl-L-homocysteine + 4 H(+). Functionally, specifically dimethylates two adjacent adenosines (A1518 and A1519) in the loop of a conserved hairpin near the 3'-end of 16S rRNA in the 30S particle. May play a critical role in biogenesis of 30S subunits. The polypeptide is Ribosomal RNA small subunit methyltransferase A (Burkholderia lata (strain ATCC 17760 / DSM 23089 / LMG 22485 / NCIMB 9086 / R18194 / 383)).